Reading from the N-terminus, the 254-residue chain is Probable phosphatase Sbal223_2880 (254 aa).

Zn(2+) is bound by residues His8, His10, His16, His41, Glu74, His102, His132, Asp193, and His195.

This sequence belongs to the PHP family. It depends on Zn(2+) as a cofactor.

In Shewanella baltica (strain OS223), this protein is Probable phosphatase Sbal223_2880.